A 256-amino-acid chain; its full sequence is MLSFKIRDKTFESRLFLGTGKFGSNQQMEEAILASGSELVTVALKRIDLETQTDAILAHLKHPRINLLPNTSGARNAKEAIFAAQLAREALETNWLKLEIHPDPKYLMPDAIETLKATEELAKLGFIILPYIHADPVLCKRLEEAGTSAVMPLGSPIGSNKGLKTIDFLEIIIEQSKVPVIIDAGIGAPSDAAKAMELGADAVLVNTAIAIAGNPKLMAEAFKEAVMAGRKAYEAKLAQKASQAVASSPLTAFLYE.

The active-site Schiff-base intermediate with DXP is the K97. 1-deoxy-D-xylulose 5-phosphate is bound by residues G158, 184–185, and 206–207; these read AG and NT.

Belongs to the ThiG family. In terms of assembly, homotetramer. Forms heterodimers with either ThiH or ThiS.

The protein localises to the cytoplasm. The enzyme catalyses [ThiS sulfur-carrier protein]-C-terminal-Gly-aminoethanethioate + 2-iminoacetate + 1-deoxy-D-xylulose 5-phosphate = [ThiS sulfur-carrier protein]-C-terminal Gly-Gly + 2-[(2R,5Z)-2-carboxy-4-methylthiazol-5(2H)-ylidene]ethyl phosphate + 2 H2O + H(+). The protein operates within cofactor biosynthesis; thiamine diphosphate biosynthesis. In terms of biological role, catalyzes the rearrangement of 1-deoxy-D-xylulose 5-phosphate (DXP) to produce the thiazole phosphate moiety of thiamine. Sulfur is provided by the thiocarboxylate moiety of the carrier protein ThiS. In vitro, sulfur can be provided by H(2)S. This Flavobacterium psychrophilum (strain ATCC 49511 / DSM 21280 / CIP 103535 / JIP02/86) protein is Thiazole synthase.